The following is a 363-amino-acid chain: 3-isopropylmalate dehydrogenase (363 aa).

NAD(+) is bound at residue 78-91; that stretch reads GPKWEHLPPAEQPE. The substrate site is built by R99, R109, R138, and D227. Mg(2+) contacts are provided by D227, D251, and D255. An NAD(+)-binding site is contributed by 285–297; sequence GSAPDIAGKNIAN.

Belongs to the isocitrate and isopropylmalate dehydrogenases family. LeuB type 1 subfamily. Homodimer. The cofactor is Mg(2+). Mn(2+) is required as a cofactor.

The protein localises to the cytoplasm. The catalysed reaction is (2R,3S)-3-isopropylmalate + NAD(+) = 4-methyl-2-oxopentanoate + CO2 + NADH. The protein operates within amino-acid biosynthesis; L-leucine biosynthesis; L-leucine from 3-methyl-2-oxobutanoate: step 3/4. Functionally, catalyzes the oxidation of 3-carboxy-2-hydroxy-4-methylpentanoate (3-isopropylmalate) to 3-carboxy-4-methyl-2-oxopentanoate. The product decarboxylates to 4-methyl-2 oxopentanoate. The sequence is that of 3-isopropylmalate dehydrogenase from Yersinia pestis.